The sequence spans 452 residues: 3-phosphoshikimate 1-carboxyvinyltransferase (452 aa).

3 residues coordinate 3-phosphoshikimate: lysine 24, serine 25, and arginine 29. Residue lysine 24 participates in phosphoenolpyruvate binding. Glycine 95 and arginine 123 together coordinate phosphoenolpyruvate. Residues serine 167, glutamine 169, aspartate 319, and lysine 346 each contribute to the 3-phosphoshikimate site. Residue glutamine 169 coordinates phosphoenolpyruvate. Catalysis depends on aspartate 319, which acts as the Proton acceptor. Arginine 350 and arginine 394 together coordinate phosphoenolpyruvate.

This sequence belongs to the EPSP synthase family. Monomer.

Its subcellular location is the cytoplasm. The catalysed reaction is 3-phosphoshikimate + phosphoenolpyruvate = 5-O-(1-carboxyvinyl)-3-phosphoshikimate + phosphate. The protein operates within metabolic intermediate biosynthesis; chorismate biosynthesis; chorismate from D-erythrose 4-phosphate and phosphoenolpyruvate: step 6/7. Catalyzes the transfer of the enolpyruvyl moiety of phosphoenolpyruvate (PEP) to the 5-hydroxyl of shikimate-3-phosphate (S3P) to produce enolpyruvyl shikimate-3-phosphate and inorganic phosphate. The sequence is that of 3-phosphoshikimate 1-carboxyvinyltransferase from Phenylobacterium zucineum (strain HLK1).